A 340-amino-acid chain; its full sequence is HTH-type transcriptional repressor PurR (340 aa).

Positions 2–56 (ATIKDVAKLVGVSTTTVSHVINKTRFVAEDTTKAVWEAIASLNYSPSAVARSLKV) constitute an HTH lacI-type domain. A DNA-binding region (H-T-H motif) is located at residues 4–23 (IKDVAKLVGVSTTTVSHVIN). The DNA-binding element occupies 48-56 (SAVARSLKV). Tyrosine 73, lysine 188, threonine 190, phenylalanine 219, and aspartate 273 together coordinate hypoxanthine.

In terms of assembly, homodimer.

The protein operates within purine metabolism; purine nucleotide biosynthesis [regulation]. Its function is as follows. Is the main repressor of the genes involved in the de novo synthesis of purine nucleotides, regulating purB, purC, purEK, purF, purHD, purL, purMN and guaBA expression. PurR is allosterically activated to bind its cognate DNA by binding the purine corepressors, hypoxanthine or guanine, thereby effecting transcription repression. The chain is HTH-type transcriptional repressor PurR from Glaesserella parasuis serovar 5 (strain SH0165) (Haemophilus parasuis).